The sequence spans 457 residues: Elongation factor 1-alpha (457 aa).

Glycine 2 carries the post-translational modification N,N,N-trimethylglycine. N6,N6-dimethyllysine; alternate is present on lysine 3. Lysine 3 is modified (N6-methyllysine; alternate). One can recognise a tr-type G domain in the interval 5–240 (KTHVNVVVIG…DAIEPPVRPS (236 aa)). A G1 region spans residues 14–21 (GHVDSGKS). Residue 14–21 (GHVDSGKS) coordinates GTP. Lysine 30 carries the N6-methyllysine modification. Residues 70–74 (GITID) form a G2 region. Lysine 79 carries the post-translational modification N6,N6,N6-trimethyllysine. Residues 91 to 94 (DAPG) form a G3 region. Residues 91-95 (DAPGH) and 153-156 (NKMD) contribute to the GTP site. The interval 153–156 (NKMD) is G4. The segment at 192 to 194 (SGW) is G5. The residue at position 316 (lysine 316) is an N6,N6-dimethyllysine; alternate. An N6-methyllysine; alternate modification is found at lysine 316. Position 389 is an N6-methyllysine (lysine 389).

The protein belongs to the TRAFAC class translation factor GTPase superfamily. Classic translation factor GTPase family. EF-Tu/EF-1A subfamily.

The protein localises to the cytoplasm. Its function is as follows. This protein promotes the GTP-dependent binding of aminoacyl-tRNA to the A-site of ribosomes during protein biosynthesis. The sequence is that of Elongation factor 1-alpha (TEF-3) from Mucor circinelloides f. lusitanicus (Mucor racemosus var. lusitanicus).